The following is a 476-amino-acid chain: Aspartyl/glutamyl-tRNA(Asn/Gln) amidotransferase subunit B (476 aa).

It belongs to the GatB/GatE family. GatB subfamily. Heterotrimer of A, B and C subunits.

It carries out the reaction L-glutamyl-tRNA(Gln) + L-glutamine + ATP + H2O = L-glutaminyl-tRNA(Gln) + L-glutamate + ADP + phosphate + H(+). It catalyses the reaction L-aspartyl-tRNA(Asn) + L-glutamine + ATP + H2O = L-asparaginyl-tRNA(Asn) + L-glutamate + ADP + phosphate + 2 H(+). Allows the formation of correctly charged Asn-tRNA(Asn) or Gln-tRNA(Gln) through the transamidation of misacylated Asp-tRNA(Asn) or Glu-tRNA(Gln) in organisms which lack either or both of asparaginyl-tRNA or glutaminyl-tRNA synthetases. The reaction takes place in the presence of glutamine and ATP through an activated phospho-Asp-tRNA(Asn) or phospho-Glu-tRNA(Gln). The polypeptide is Aspartyl/glutamyl-tRNA(Asn/Gln) amidotransferase subunit B (Lacticaseibacillus paracasei (strain ATCC 334 / BCRC 17002 / CCUG 31169 / CIP 107868 / KCTC 3260 / NRRL B-441) (Lactobacillus paracasei)).